The sequence spans 314 residues: Ribonuclease Z (314 aa).

Zn(2+) contacts are provided by histidine 61, histidine 63, aspartate 65, histidine 66, histidine 137, aspartate 207, and histidine 263. Aspartate 65 (proton acceptor) is an active-site residue.

Belongs to the RNase Z family. As to quaternary structure, homodimer. Zn(2+) is required as a cofactor.

The catalysed reaction is Endonucleolytic cleavage of RNA, removing extra 3' nucleotides from tRNA precursor, generating 3' termini of tRNAs. A 3'-hydroxy group is left at the tRNA terminus and a 5'-phosphoryl group is left at the trailer molecule.. In terms of biological role, zinc phosphodiesterase, which displays some tRNA 3'-processing endonuclease activity. Probably involved in tRNA maturation, by removing a 3'-trailer from precursor tRNA. The polypeptide is Ribonuclease Z (Thermococcus kodakarensis (strain ATCC BAA-918 / JCM 12380 / KOD1) (Pyrococcus kodakaraensis (strain KOD1))).